The chain runs to 77 residues: Large ribosomal subunit protein bL28 (77 aa).

Belongs to the bacterial ribosomal protein bL28 family.

In Methylibium petroleiphilum (strain ATCC BAA-1232 / LMG 22953 / PM1), this protein is Large ribosomal subunit protein bL28.